The sequence spans 2596 residues: Cadherin EGF LAG seven-pass G-type receptor fmi-1 (2596 aa).

An N-terminal signal peptide occupies residues 1–22 (MMLDRIMFLLFFILSLVIGSFS). Over 23–2229 (EYLDDKYYST…IVRVAQMDNM (2207 aa)) the chain is Extracellular. 8 consecutive Cadherin domains span residues 166-270 (QQEK…SPIF), 271-375 (EKDS…APVF), 376-479 (ASDS…APTL), 480-581 (IAAQ…APTF), 582-682 (DKKE…APYF), 683-784 (NDHP…SPQF), 785-892 (TSSS…APTF), and 893-1000 (EQLS…KPAL). Residues N381, N387, N562, N587, N765, and N824 are each glycosylated (N-linked (GlcNAc...) asparagine). 2 N-linked (GlcNAc...) asparagine glycosylation sites follow: N1030 and N1263. Positions 1251 to 1287 (RIDECYRGRCSNNSTCVAFENTYQCECKPGWIGRHCE) constitute an EGF-like 1 domain. Disulfide bonds link C1255–C1266, C1260–C1275, C1277–C1286, C1497–C1526, C1533–C1546, C1540–C1555, C1557–C1567, C1709–C1732, C1738–C1750, C1744–C1759, C1761–C1770, and C1780–C1785. One can recognise a Laminin G-like 1 domain in the interval 1333-1526 (SVSFDGEGLL…HKVGQVHEGC (194 aa)). Positions 1529 to 1568 (RKDFCSTSDGQCSATSKCVNRWGGRICSCPQSVHSTGECV) constitute an EGF-like 2 domain. The region spanning 1577 to 1732 (RGHSLFEEES…KKKGKTRAGC (156 aa)) is the Laminin G-like 2 domain. EGF-like domains are found at residues 1734-1771 (VPNR…DTCL) and 1776-1808 (VANV…KNCQ). A glycan (N-linked (GlcNAc...) asparagine) is linked at N1789. An intrachain disulfide couples C1798 to C1807. 5 N-linked (GlcNAc...) asparagine glycosylation sites follow: N1965, N1992, N2152, N2195, and N2228. The GAIN-B domain occupies 2054–2219 (EYSTLISKLW…TMFVNDQSSS (166 aa)). An intrachain disulfide couples C2174 to C2201. Residues 2174–2219 (CVRFDEKSGTWTARGAALIGLNLTHAACEYNRIGVFTMFVNDQSSS) are GPS. The helical transmembrane segment at 2230-2250 (TSPAIAGVALFLCFLSILLTL) threads the bilayer. The Cytoplasmic segment spans residues 2251 to 2261 (SRRSLKTHSVR). The helical transmembrane segment at 2262–2282 (IGFILFFAINILNLFFVHKTA) threads the bilayer. Over 2283–2292 (INQAYCPVRN) the chain is Extracellular. The chain crosses the membrane as a helical span at residues 2293-2313 (AMLSFTSSAPFAWLFLYGLYI). Residues 2314–2326 (YRMLADGSSSPSL) are Cytoplasmic-facing. A helical transmembrane segment spans residues 2327-2347 (TTSLLVGIVFPCLISFTTFFV). The Extracellular segment spans residues 2348-2356 (TDQCSLSPH). A helical transmembrane segment spans residues 2357-2377 (LWLFWCIILPIGLFLLLSFYA). The Cytoplasmic segment spans residues 2378-2401 (AATSVLVSLHKKYDVFVAKYNVKR). Residues 2402 to 2422 (AVFQHFILTIFTLGMTLTGLF) traverse the membrane as a helical segment. At 2423-2437 (ANQLPLPMEIMEISQ) the chain is on the extracellular side. Residues 2438–2458 (SIIYLIAALVIFLWCVCDITT) form a helical membrane-spanning segment. Residues 2459–2596 (KASDSNPSMW…KNTTSTFNRE (138 aa)) lie on the Cytoplasmic side of the membrane.

It belongs to the G-protein coupled receptor 2 family. LN-TM7 subfamily. Expressed in a region of neuropil around the nerve ring and the ventral cord (at protein level). Expressed in the head, tail, ventral cord, nerve ring and neurons including HSN neurons. Expressed in DA, VA, and VB and weakly in the DB cholinergic neurons. Not expressed in ventral D-type GABAergic motorneurons.

It is found in the cell membrane. The protein resides in the cell projection. Its subcellular location is the axon. The protein localises to the dendrite. Its function is as follows. During ventral cord development, required for axon fasciculation and navigation, mediating both pioneer and follower axon extension, guidance and track formation. Acts in CEPsh glia and SubL neurons to guide follower axons into the nerve ring. Promotes motorneuron development by positively regulating the extension of the anterior neurite of ventral D-type GABAergic motorneurons along the anterior-posterior axis of the ventral nerve cord. Plays a role in synaptogenesis by regulating synaptic vesicle accumulation at GABAergic and cholinergic neuromuscular junctions. In Caenorhabditis elegans, this protein is Cadherin EGF LAG seven-pass G-type receptor fmi-1.